The chain runs to 861 residues: Semaphorin-4D (861 aa).

The first 23 residues, 1–23, serve as a signal peptide directing secretion; that stretch reads MRMCAPVRGLFLALVVVLRTAVA. Residues 24–500 form the Sema domain; that stretch reads FAPVPRLTWE…SNSGVVQAPL (477 aa). Residues 24-733 are Extracellular-facing; that stretch reads FAPVPRLTWE…TVYLKSSDNR (710 aa). N49 and N77 each carry an N-linked (GlcNAc...) asparagine glycan. 2 disulfide bridges follow: C97–C108 and C126–C135. N-linked (GlcNAc...) asparagine glycosylation is found at N139 and N191. 2 disulfides stabilise this stretch: C257-C370 and C281-C326. N-linked (GlcNAc...) asparagine glycans are attached at residues N379 and N419. A PSI domain is found at 502–551; the sequence is FCEKHGSCEDCVLARDPYCAWSPAIKACVTLHQEEASSRGWIQDMSGDTS. 4 cysteine pairs are disulfide-bonded: C503/C520, C509/C553, C512/C529, and C576/C624. In terms of domain architecture, Ig-like C2-type spans 555–636; the sequence is DKSKESFNQH…EERVRNKTVS (82 aa). N-linked (GlcNAc...) asparagine glycosylation is found at N613 and N632. The segment at 649–709 is disordered; that stretch reads VPRTPPSPTS…KSSSGTSCEP (61 aa). Polar residues predominate over residues 657–681; it reads TSEDAQTEGSKITSKMPVASTQGSS. Residues 734 to 754 form a helical membrane-spanning segment; it reads LLMSLLLFIFVLFLCLFSYNC. The Cytoplasmic portion of the chain corresponds to 755 to 861; that stretch reads YKGYLPGQCL…KFADSDADGD (107 aa). Phosphoserine occurs at positions 782 and 832. The segment at 793-839 is disordered; the sequence is VEPGSFSQQNGDHPKPALDTGYETEQDTITSKVPTDREDSQRIDELS. Over residues 826-839 the composition is skewed to basic and acidic residues; sequence PTDREDSQRIDELS.

Belongs to the semaphorin family. In terms of assembly, homodimer. Interacts with PLXNB1. Interacts with PLXNB2. Strongly expressed in lymphoid tissues, especially in the thymus, as well as in the nervous tissues. Expressed in neurons and glia in the developing hippocampus.

Its subcellular location is the cell membrane. In terms of biological role, cell surface receptor for PLXNB1 and PLXNB2 that plays an important role in cell-cell signaling. Regulates GABAergic synapse development. Promotes the development of inhibitory synapses in a PLXNB1-dependent manner. Modulates the complexity and arborization of developing neurites in hippocampal neurons by activating PLXNB1 and interaction with PLXNB1 mediates activation of RHOA. Promotes the migration of cerebellar granule cells. Plays a role in the immune system; induces B-cells to aggregate and improves their viability (in vitro). Induces endothelial cell migration through the activation of PTK2B/PYK2, SRC, and the phosphatidylinositol 3-kinase-AKT pathway. This Mus musculus (Mouse) protein is Semaphorin-4D (Sema4d).